We begin with the raw amino-acid sequence, 132 residues long: Holo-[acyl-carrier-protein] synthase (132 aa).

The Mg(2+) site is built by D8 and E62.

This sequence belongs to the P-Pant transferase superfamily. AcpS family. It depends on Mg(2+) as a cofactor.

The protein localises to the cytoplasm. The enzyme catalyses apo-[ACP] + CoA = holo-[ACP] + adenosine 3',5'-bisphosphate + H(+). Its function is as follows. Transfers the 4'-phosphopantetheine moiety from coenzyme A to a Ser of acyl-carrier-protein. The protein is Holo-[acyl-carrier-protein] synthase of Leptothrix cholodnii (strain ATCC 51168 / LMG 8142 / SP-6) (Leptothrix discophora (strain SP-6)).